The following is a 127-amino-acid chain: Holo-[acyl-carrier-protein] synthase (127 aa).

Positions 9 and 58 each coordinate Mg(2+).

The protein belongs to the P-Pant transferase superfamily. AcpS family. It depends on Mg(2+) as a cofactor.

The protein localises to the cytoplasm. The enzyme catalyses apo-[ACP] + CoA = holo-[ACP] + adenosine 3',5'-bisphosphate + H(+). Its function is as follows. Transfers the 4'-phosphopantetheine moiety from coenzyme A to a Ser of acyl-carrier-protein. This chain is Holo-[acyl-carrier-protein] synthase, found in Shewanella baltica (strain OS195).